The primary structure comprises 304 residues: Glutaminase (304 aa).

Ser-63, Asn-113, Glu-157, Asn-164, Tyr-188, Tyr-240, and Val-258 together coordinate substrate.

This sequence belongs to the glutaminase family. Homotetramer.

It catalyses the reaction L-glutamine + H2O = L-glutamate + NH4(+). This chain is Glutaminase, found in Ralstonia nicotianae (strain ATCC BAA-1114 / GMI1000) (Ralstonia solanacearum).